Reading from the N-terminus, the 357-residue chain is tRNA N6-adenosine threonylcarbamoyltransferase (357 aa).

The Fe cation site is built by His115 and His119. Residues 137–141, Asp170, Gly183, and Asn281 each bind substrate; that span reads LASGG. Asp309 contacts Fe cation.

The protein belongs to the KAE1 / TsaD family. Fe(2+) serves as cofactor.

Its subcellular location is the cytoplasm. The enzyme catalyses L-threonylcarbamoyladenylate + adenosine(37) in tRNA = N(6)-L-threonylcarbamoyladenosine(37) in tRNA + AMP + H(+). Required for the formation of a threonylcarbamoyl group on adenosine at position 37 (t(6)A37) in tRNAs that read codons beginning with adenine. Is involved in the transfer of the threonylcarbamoyl moiety of threonylcarbamoyl-AMP (TC-AMP) to the N6 group of A37, together with TsaE and TsaB. TsaD likely plays a direct catalytic role in this reaction. The polypeptide is tRNA N6-adenosine threonylcarbamoyltransferase (Afipia carboxidovorans (strain ATCC 49405 / DSM 1227 / KCTC 32145 / OM5) (Oligotropha carboxidovorans)).